Here is a 384-residue protein sequence, read N- to C-terminus: Glycerol 3-phosphate oxidase (384 aa).

The signal sequence occupies residues 1-15 (METRDVLIVGGGVIG). Isoleucine 14 provides a ligand contact to FAD. Residue cysteine 16 is the site of N-palmitoyl cysteine attachment. The S-diacylglycerol cysteine moiety is linked to residue cysteine 16. Residues glutamate 33, 42–43 (TS), and 47–49 (SGV) each bind FAD. Sn-glycerol 3-phosphate-binding residues include serine 47 and histidine 51. The Proton acceptor role is filled by histidine 51. Valine 177 contributes to the FAD binding site. Residues lysine 258 and arginine 320 each coordinate sn-glycerol 3-phosphate. 346-347 (MK) is a binding site for FAD. Serine 348 is a sn-glycerol 3-phosphate binding site. Position 352 (threonine 352) interacts with FAD.

Monomer. Requires FAD as cofactor.

It localises to the cytoplasm. It is found in the cell membrane. The catalysed reaction is sn-glycerol 3-phosphate + O2 = dihydroxyacetone phosphate + H2O2. It functions in the pathway polyol metabolism; glycerol degradation via glycerol kinase pathway; glycerone phosphate from sn-glycerol 3-phosphate (aerobic route): step 1/1. Its function is as follows. Catalyzes the oxidation of glycerol 3-phosphate to dihydroxyacetone phosphate (DHAP), with a reduction of O2 to H2O2. The formation of hydrogen peroxide by this enzyme is crucial for cytotoxic effects of M.pneumoniae on host cells. Is involved in the metabolism of glycerol and is essential for glycerol utilization; glycerol is one of the few carbon sources that can be utilized by M.pneumoniae for growth. To a lesser extent, is also able to use glyceraldehyde 3-phosphate (GAP), an intermediate in the glycolysis pathway, as a substrate (but the structure of the product has not been elucidated). Therefore, in the absence of glycerol, GAP may serve as a substrate in the GlpO reaction to supply H2O2 during mycoplasma infection. Does not show any dehydrogenase activity with NAD(+). This chain is Glycerol 3-phosphate oxidase, found in Mycoplasma pneumoniae (strain ATCC 29342 / M129 / Subtype 1) (Mycoplasmoides pneumoniae).